A 165-amino-acid chain; its full sequence is NADPH-dependent 7-cyano-7-deazaguanine reductase (165 aa).

Cysteine 56 functions as the Thioimide intermediate in the catalytic mechanism. The Proton donor role is filled by aspartate 63. Substrate is bound by residues 78-80 (VES) and 97-98 (HE).

It belongs to the GTP cyclohydrolase I family. QueF type 1 subfamily.

It localises to the cytoplasm. It catalyses the reaction 7-aminomethyl-7-carbaguanine + 2 NADP(+) = 7-cyano-7-deazaguanine + 2 NADPH + 3 H(+). It functions in the pathway tRNA modification; tRNA-queuosine biosynthesis. Its function is as follows. Catalyzes the NADPH-dependent reduction of 7-cyano-7-deazaguanine (preQ0) to 7-aminomethyl-7-deazaguanine (preQ1). This chain is NADPH-dependent 7-cyano-7-deazaguanine reductase, found in Bacillus cytotoxicus (strain DSM 22905 / CIP 110041 / 391-98 / NVH 391-98).